A 178-amino-acid chain; its full sequence is ATP synthase subunit delta (178 aa).

Belongs to the ATPase delta chain family. F-type ATPases have 2 components, F(1) - the catalytic core - and F(0) - the membrane proton channel. F(1) has five subunits: alpha(3), beta(3), gamma(1), delta(1), epsilon(1). F(0) has three main subunits: a(1), b(2) and c(10-14). The alpha and beta chains form an alternating ring which encloses part of the gamma chain. F(1) is attached to F(0) by a central stalk formed by the gamma and epsilon chains, while a peripheral stalk is formed by the delta and b chains.

Its subcellular location is the cell membrane. Its function is as follows. F(1)F(0) ATP synthase produces ATP from ADP in the presence of a proton or sodium gradient. F-type ATPases consist of two structural domains, F(1) containing the extramembraneous catalytic core and F(0) containing the membrane proton channel, linked together by a central stalk and a peripheral stalk. During catalysis, ATP synthesis in the catalytic domain of F(1) is coupled via a rotary mechanism of the central stalk subunits to proton translocation. This protein is part of the stalk that links CF(0) to CF(1). It either transmits conformational changes from CF(0) to CF(1) or is implicated in proton conduction. The protein is ATP synthase subunit delta of Streptococcus equi subsp. zooepidemicus (strain MGCS10565).